Here is a 116-residue protein sequence, read N- to C-terminus: MKNRDIIVEAGSKVLRSTPRKLNLVADLVRNKKVSFANVQLRFCEKKAAGFIMKVLNSAIANAQNNYGLNVDNLYIKEILIGKSLTLRRVYPKAMGRANRMSKFYSNITIKLKEIV.

This sequence belongs to the universal ribosomal protein uL22 family. As to quaternary structure, part of the 50S ribosomal subunit.

In terms of biological role, this protein binds specifically to 23S rRNA; its binding is stimulated by other ribosomal proteins, e.g. L4, L17, and L20. It is important during the early stages of 50S assembly. It makes multiple contacts with different domains of the 23S rRNA in the assembled 50S subunit and ribosome. The globular domain of the protein is located near the polypeptide exit tunnel on the outside of the subunit, while an extended beta-hairpin is found that lines the wall of the exit tunnel in the center of the 70S ribosome. This chain is Large ribosomal subunit protein uL22, found in Wolbachia pipientis subsp. Culex pipiens (strain wPip).